The chain runs to 95 residues: Succinate dehydrogenase membrane anchor subunit (95 aa).

Topologically, residues 1 to 19 (MYKTLLAQVFFHSIAKKKL) are mitochondrial matrix. Residues 20–40 (YFFWLPRLFSLLLVPGFLFDI) traverse the membrane as a helical segment. Position 41 (glutamate 41) is a topological domain, mitochondrial intermembrane. A helical transmembrane segment spans residues 42–62 (ILFLFHPIILLHASLGLSVII). Histidine 53 provides a ligand contact to heme. Residues 63-74 (EDYIHIETIKFQ) lie on the Mitochondrial matrix side of the membrane. Tyrosine 65 contributes to the a ubiquinone binding site. The chain crosses the membrane as a helical span at residues 75–95 (YLSLIKLLLVLLINLNILYLL).

As to quaternary structure, part of an enzyme complex containing four subunits: a flavoprotein, an iron-sulfur protein, plus two membrane-anchoring proteins. It depends on heme as a cofactor.

The protein resides in the mitochondrion inner membrane. It participates in carbohydrate metabolism; tricarboxylic acid cycle. Functionally, membrane-anchoring subunit of succinate dehydrogenase (SDH). The polypeptide is Succinate dehydrogenase membrane anchor subunit (SDH4) (Porphyra purpurea (Red seaweed)).